The sequence spans 457 residues: Serine--tRNA ligase (457 aa).

252–254 contributes to the L-serine binding site; that stretch reads TAE. Residues 283–285 and V299 each bind ATP; that span reads RKE. Residue E306 coordinates L-serine. An ATP-binding site is contributed by 370–373; the sequence is EVVS. T406 contributes to the L-serine binding site.

This sequence belongs to the class-II aminoacyl-tRNA synthetase family. Type-1 seryl-tRNA synthetase subfamily. In terms of assembly, homodimer. The tRNA molecule binds across the dimer.

It is found in the cytoplasm. The enzyme catalyses tRNA(Ser) + L-serine + ATP = L-seryl-tRNA(Ser) + AMP + diphosphate + H(+). It carries out the reaction tRNA(Sec) + L-serine + ATP = L-seryl-tRNA(Sec) + AMP + diphosphate + H(+). The protein operates within aminoacyl-tRNA biosynthesis; selenocysteinyl-tRNA(Sec) biosynthesis; L-seryl-tRNA(Sec) from L-serine and tRNA(Sec): step 1/1. Catalyzes the attachment of serine to tRNA(Ser). Is also able to aminoacylate tRNA(Sec) with serine, to form the misacylated tRNA L-seryl-tRNA(Sec), which will be further converted into selenocysteinyl-tRNA(Sec). This chain is Serine--tRNA ligase, found in Thermococcus onnurineus (strain NA1).